The following is a 101-amino-acid chain: NADH-quinone oxidoreductase subunit K (101 aa).

3 helical membrane-spanning segments follow: residues 4–24 (LSHY…GIFI), 30–50 (IVIL…LVAF), and 65–85 (FVLT…VVFF).

This sequence belongs to the complex I subunit 4L family. In terms of assembly, NDH-1 is composed of 14 different subunits. Subunits NuoA, H, J, K, L, M, N constitute the membrane sector of the complex.

It is found in the cell inner membrane. The enzyme catalyses a quinone + NADH + 5 H(+)(in) = a quinol + NAD(+) + 4 H(+)(out). In terms of biological role, NDH-1 shuttles electrons from NADH, via FMN and iron-sulfur (Fe-S) centers, to quinones in the respiratory chain. The immediate electron acceptor for the enzyme in this species is believed to be ubiquinone. Couples the redox reaction to proton translocation (for every two electrons transferred, four hydrogen ions are translocated across the cytoplasmic membrane), and thus conserves the redox energy in a proton gradient. The chain is NADH-quinone oxidoreductase subunit K from Methylobacterium sp. (strain 4-46).